The primary structure comprises 354 residues: Membrane progestin receptor beta (354 aa).

The Cytoplasmic segment spans residues 1-76 (MTTAILERLS…FSLFQKHNEV (76 aa)). The helical transmembrane segment at 77–97 (VNVWTHLLAALAVLLRFWAFV) threads the bilayer. Topologically, residues 98 to 111 (EAGALQWASPHTLP) are extracellular. Residues 112–132 (LLLFILSSITYLTCSLLAHLL) form a helical membrane-spanning segment. Residues 133 to 173 (QSKSELSHYTFYFVDYVGVSVYQYGSALAHFFYSSDQAWYE) are Cytoplasmic-facing. A helical membrane pass occupies residues 174-194 (LFWIFFLPAAAFCGWLSCAGC). Residues 195-213 (CYAKYRYRRPYPVMRKICQ) are Extracellular-facing. The chain crosses the membrane as a helical span at residues 214–234 (VVPAGLAFVLDISPVAHRVAL). The Cytoplasmic segment spans residues 235–243 (CHLAGCQEQ). The chain crosses the membrane as a helical span at residues 244–264 (AAWYHTLQILFFLVSAYFFSC). Residues 265–283 (PVPEKYFPGSCDIVGHGHQ) lie on the Extracellular side of the membrane. Residues 284–304 (IFHAFLSVCTLSQLEAILLDY) form a helical membrane-spanning segment. The Cytoplasmic segment spans residues 305–315 (QGRHEIFLQRH). Residues 316–336 (GPLSVYSACLSFFVLAACSAA) traverse the membrane as a helical segment. At 337–354 (TATLLRHKVKDRLIKKDS) the chain is on the extracellular side.

The protein belongs to the ADIPOR family. As to expression, expressed in brain and testis.

Its subcellular location is the cell membrane. Its function is as follows. Plasma membrane progesterone (P4) receptor coupled to G proteins. Seems to act through a G(i) mediated pathway. May be involved in oocyte maturation. Also binds dehydroepiandrosterone (DHEA), pregnanolone, pregnenolone and allopregnanolone. The polypeptide is Membrane progestin receptor beta (Mus musculus (Mouse)).